We begin with the raw amino-acid sequence, 431 residues long: Serine hydroxymethyltransferase (431 aa).

Residues L127 and 131-133 contribute to the (6S)-5,6,7,8-tetrahydrofolate site; that span reads GHL. Position 236 is an N6-(pyridoxal phosphate)lysine (K236).

It belongs to the SHMT family. Homodimer. The cofactor is pyridoxal 5'-phosphate.

The protein resides in the cytoplasm. The enzyme catalyses (6R)-5,10-methylene-5,6,7,8-tetrahydrofolate + glycine + H2O = (6S)-5,6,7,8-tetrahydrofolate + L-serine. Its pathway is one-carbon metabolism; tetrahydrofolate interconversion. It participates in amino-acid biosynthesis; glycine biosynthesis; glycine from L-serine: step 1/1. In terms of biological role, catalyzes the reversible interconversion of serine and glycine with tetrahydrofolate (THF) serving as the one-carbon carrier. This reaction serves as the major source of one-carbon groups required for the biosynthesis of purines, thymidylate, methionine, and other important biomolecules. Also exhibits THF-independent aldolase activity toward beta-hydroxyamino acids, producing glycine and aldehydes, via a retro-aldol mechanism. The sequence is that of Serine hydroxymethyltransferase from Granulibacter bethesdensis (strain ATCC BAA-1260 / CGDNIH1).